Here is a 169-residue protein sequence, read N- to C-terminus: Cilia- and flagella-associated protein 276 (169 aa).

Disordered stretches follow at residues 26–45 (SKKL…EPWS) and 150–169 (HTAA…FFST). Residues 36 to 45 (HLAQQQEPWS) are compositionally biased toward polar residues. Residues 160 to 169 (RKKDGGFFST) are compositionally biased toward basic and acidic residues.

Microtubule inner protein component of sperm flagellar doublet microtubules. Expressed in cerebrum, cerebellum, gastrocnemius muscle, spinal cord and lung tissues.

It is found in the cytoplasm. The protein resides in the cytoskeleton. It localises to the flagellum axoneme. The protein localises to the cilium axoneme. Microtubule inner protein (MIP) part of the dynein-decorated doublet microtubules (DMTs) in cilia axoneme, which is required for motile cilia beating. May play an important role for the maintenance of myelin-axon integrity. May affect intracellular Ca(2+) homeostasis. The sequence is that of Cilia- and flagella-associated protein 276 from Homo sapiens (Human).